A 365-amino-acid polypeptide reads, in one-letter code: Probable dual-specificity RNA methyltransferase RlmN (365 aa).

Glutamate 108 (proton acceptor) is an active-site residue. One can recognise a Radical SAM core domain in the interval 114-352 (YPDRNTVCIS…SCTVRDTRGR (239 aa)). Cysteine 121 and cysteine 358 form a disulfide bridge. [4Fe-4S] cluster is bound by residues cysteine 128, cysteine 132, and cysteine 135. S-adenosyl-L-methionine is bound by residues 179-180 (GE), serine 213, 236-238 (SLH), and asparagine 315. The active-site S-methylcysteine intermediate is cysteine 358.

The protein belongs to the radical SAM superfamily. RlmN family. [4Fe-4S] cluster serves as cofactor.

The protein resides in the cytoplasm. The enzyme catalyses adenosine(2503) in 23S rRNA + 2 reduced [2Fe-2S]-[ferredoxin] + 2 S-adenosyl-L-methionine = 2-methyladenosine(2503) in 23S rRNA + 5'-deoxyadenosine + L-methionine + 2 oxidized [2Fe-2S]-[ferredoxin] + S-adenosyl-L-homocysteine. It carries out the reaction adenosine(37) in tRNA + 2 reduced [2Fe-2S]-[ferredoxin] + 2 S-adenosyl-L-methionine = 2-methyladenosine(37) in tRNA + 5'-deoxyadenosine + L-methionine + 2 oxidized [2Fe-2S]-[ferredoxin] + S-adenosyl-L-homocysteine. Its function is as follows. Specifically methylates position 2 of adenine 2503 in 23S rRNA and position 2 of adenine 37 in tRNAs. This chain is Probable dual-specificity RNA methyltransferase RlmN, found in Mycolicibacterium gilvum (strain PYR-GCK) (Mycobacterium gilvum (strain PYR-GCK)).